Consider the following 856-residue polypeptide: Inactive rhomboid protein 1 (856 aa).

Residues 1-20 (MSEARRDSTSSLQRKKPPWL) form a disordered region. The Cytoplasmic segment spans residues 1–412 (MSEARRDSTS…HRPFFTYWLT (412 aa)). Residues Ser76 and Ser176 each carry the phosphoserine modification. A phosphothreonine mark is found at Thr180 and Thr183. A Phosphoserine modification is found at Ser391. Residues 413–433 (FVHSLVTILAVCIYGIAPVGF) form a helical membrane-spanning segment. Residues 434–656 (SQHETVDSVL…NPEVPDQFYR (223 aa)) are Lumenal-facing. N-linked (GlcNAc...) asparagine glycosylation is present at Asn584. Residues 657–677 (LWLSLFLHAGILHCLVSVCFQ) form a helical membrane-spanning segment. Residues 678–692 (MTVLRDLEKLAGWHR) are Cytoplasmic-facing. Residues 693 to 713 (IAIIYLLSGVTGNLASAIFLP) traverse the membrane as a helical segment. Topologically, residues 714 to 715 (YR) are lumenal. The helical transmembrane segment at 716-736 (AEVGPAGSQFGILACLFVELF) threads the bilayer. The Cytoplasmic portion of the chain corresponds to 737–747 (QSWQILARPWR). Residues 748–768 (AFFKLLAVVLFLFAFGLLPWI) form a helical membrane-spanning segment. Over 769–773 (DNFAH) the chain is Lumenal. The helical transmembrane segment at 774-794 (ISGFVSGLFLSFAFLPYISFG) threads the bilayer. The Cytoplasmic segment spans residues 795–804 (KFDLYRKRCQ). A helical transmembrane segment spans residues 805 to 825 (IIIFQAVFLGLLAGLVVLFYF). The Lumenal portion of the chain corresponds to 826–856 (YPVRCEWCEFLTCIPFTDKFCEKYELDAQLH).

It belongs to the peptidase S54 family. As to quaternary structure, homodimer, or homooligomer. Interacts with TGFA and HBEGF. Interacts with EGF; may retain EGF in the endoplasmic reticulum and regulates its degradation through the endoplasmic reticulum-associated degradation (ERAD). Interacts (via cytoplasmic N-terminus) with FRMD8/iTAP; this interaction leads to mutual protein stabilization. Interacts with ADAM17/TACE.

It is found in the endoplasmic reticulum membrane. It localises to the golgi apparatus membrane. Regulates ADAM17 protease, a sheddase of the epidermal growth factor (EGF) receptor ligands and TNF, thereby plays a role in sleep, cell survival, proliferation, migration and inflammation. Does not exhibit any protease activity on its own. This is Inactive rhomboid protein 1 (Rhbdf1) from Rattus norvegicus (Rat).